Here is a 412-residue protein sequence, read N- to C-terminus: Imidazolonepropionase (412 aa).

The Fe(3+) site is built by histidine 71 and histidine 73. Residues histidine 71 and histidine 73 each coordinate Zn(2+). 4-imidazolone-5-propanoate contacts are provided by arginine 80, tyrosine 143, and histidine 176. Tyrosine 143 is a binding site for N-formimidoyl-L-glutamate. Fe(3+) is bound at residue histidine 241. Histidine 241 serves as a coordination point for Zn(2+). Glutamine 244 lines the 4-imidazolone-5-propanoate pocket. Aspartate 316 lines the Fe(3+) pocket. Residue aspartate 316 coordinates Zn(2+). Positions 318 and 320 each coordinate N-formimidoyl-L-glutamate. Residue threonine 321 coordinates 4-imidazolone-5-propanoate.

It belongs to the metallo-dependent hydrolases superfamily. HutI family. Zn(2+) serves as cofactor. Requires Fe(3+) as cofactor.

Its subcellular location is the cytoplasm. It catalyses the reaction 4-imidazolone-5-propanoate + H2O = N-formimidoyl-L-glutamate. It participates in amino-acid degradation; L-histidine degradation into L-glutamate; N-formimidoyl-L-glutamate from L-histidine: step 3/3. In terms of biological role, catalyzes the hydrolytic cleavage of the carbon-nitrogen bond in imidazolone-5-propanoate to yield N-formimidoyl-L-glutamate. It is the third step in the universal histidine degradation pathway. The protein is Imidazolonepropionase of Aromatoleum aromaticum (strain DSM 19018 / LMG 30748 / EbN1) (Azoarcus sp. (strain EbN1)).